The sequence spans 344 residues: Beta-1,4-galactosyltransferase 4 (344 aa).

Residues 1 to 12 are Cytoplasmic-facing; that stretch reads MGCNPPYHLSYR. The chain crosses the membrane as a helical; Signal-anchor for type II membrane protein span at residues 13-38; that stretch reads LRLLLLFTLCLTVVGWATSNYFVGAI. Residues 39–344 are Lumenal-facing; it reads QVIPKAKDFM…NITVDFWTAA (306 aa). Cysteines 77 and 118 form a disulfide. UDP-alpha-D-galactose is bound by residues 129 to 133, 168 to 170, and 195 to 196; these read PHRNR, FNR, and VD. A disulfide bridge links cysteine 189 with cysteine 208. Aspartate 196 serves as a coordination point for Mn(2+). Asparagine 220 carries an N-linked (GlcNAc...) asparagine glycan. UDP-alpha-D-galactose is bound by residues tyrosine 224 and tryptophan 256. N-acetyl-D-glucosamine is bound at residue 258 to 261; that stretch reads GEDD. Residue histidine 289 coordinates Mn(2+). 289–291 contributes to the UDP-alpha-D-galactose binding site; it reads HTR. Residue arginine 301 participates in N-acetyl-D-glucosamine binding. N-linked (GlcNAc...) asparagine glycosylation is present at asparagine 335.

Belongs to the glycosyltransferase 7 family. Interacts with SLC35A2/UGT1. It depends on Mn(2+) as a cofactor.

The protein localises to the golgi apparatus membrane. It localises to the secreted. It catalyses the reaction N-acetyl-D-glucosamine + UDP-alpha-D-galactose = beta-D-galactosyl-(1-&gt;4)-N-acetyl-D-glucosamine + UDP + H(+). The enzyme catalyses a beta-D-GlcNAc-(1-&gt;3)-beta-D-Gal-(1-&gt;4)-beta-D-Glc-(1&lt;-&gt;1)-Cer(d18:1(4E)) + UDP-alpha-D-galactose = a neolactoside nLc4Cer(d18:1(4E)) + UDP + H(+). It carries out the reaction 3-O-{beta-D-galactosyl-(1-&gt;3)-[6-O-sulfo-N-acetyl-beta-D-glucosaminyl-(1-&gt;6)]-N-acetyl-alpha-D-galactosaminyl}-L-seryl-[protein] + UDP-alpha-D-galactose = 3-O-{beta-D-galactosyl-(1-&gt;3)-[beta-D-galactosyl-(1-&gt;4)-6-O-sulfo-N-acetyl-beta-D-glucosaminyl-(1-&gt;6)]-N-acetyl-alpha-D-galactosaminyl}-L-seryl-[protein] + UDP + H(+). The catalysed reaction is 3-O-{beta-D-galactosyl-(1-&gt;3)-[6-O-sulfo-N-acetyl-beta-D-glucosaminyl-(1-&gt;6)]-N-acetyl-alpha-D-galactosaminyl}-L-threonyl-[protein] + UDP-alpha-D-galactose = 3-O-{beta-D-galactosyl-(1-&gt;3)-[beta-D-galactosyl-(1-&gt;4)-6-O-sulfo-N-acetyl-beta-D-glucosaminyl-(1-&gt;6)]-N-acetyl-alpha-D-galactosaminyl}-L-threonyl-[protein] + UDP + H(+). The protein operates within protein modification; protein glycosylation. It participates in glycolipid biosynthesis. Its function is as follows. Galactose (Gal) transferase involved in the synthesis of terminal N-acetyllactosamine (LacNac) unit present on glycan chains of glycoproteins and glycosphingolipids. Catalyzes the transfer of Gal residue via a beta1-&gt;4 linkage from UDP-Gal to the non-reducing terminal N-acetyl glucosamine 6-O-sulfate (6-O-sulfoGlcNAc) in the linearly growing chain of both N- and O-linked keratan sulfate proteoglycans. Cooperates with B3GNT7 N-acetyl glucosamine transferase and CHST6 and CHST1 sulfotransferases to construct and elongate mono- and disulfated disaccharide units [-&gt;3Galbeta1-&gt;4(6-sulfoGlcNAcbeta)1-&gt;] and [-&gt;3(6-sulfoGalbeta)1-&gt;4(6-sulfoGlcNAcbeta)1-&gt;] within keratan sulfate polymer. Transfers Gal residue via a beta1-&gt;4 linkage to terminal 6-O-sulfoGlcNAc within the LacNac unit of core 2 O-glycans forming 6-sulfo-sialyl-Lewis X (sLex). May contribute to the generation of sLex epitope on mucin-type glycoproteins that serve as ligands for SELL/L-selectin, a major regulator of leukocyte migration. In the biosynthesis pathway of neolacto-series glycosphingolipids, transfers Gal residue via a beta1-&gt;4 linkage to terminal GlcNAc of a lactotriaosylceramide (Lc3Cer) acceptor to form a neolactotetraosylceramide. The sequence is that of Beta-1,4-galactosyltransferase 4 from Mus musculus (Mouse).